The chain runs to 257 residues: (R)-2-haloacid dehalogenase (257 aa).

The protein belongs to the HAD-like hydrolase superfamily. S-2-haloalkanoic acid dehalogenase family.

It carries out the reaction an (R)-2-haloacid + H2O = a (2S)-2-hydroxycarboxylate + a halide anion + H(+). Catalyzes the hydrolytic dehalogenation of small (R)-2-haloalkanoic acids to yield the corresponding (S)-2-hydroxyalkanoic acids. Acts on acids of short chain lengths, C(2) to C(4), with inversion of configuration at C-2. The protein is (R)-2-haloacid dehalogenase (dehI) of Rhizobium sp. (strain NHG3).